The primary structure comprises 202 residues: Ribonuclease HII (202 aa).

The RNase H type-2 domain occupies 13–202; that stretch reads KIEAGLDEAG…HFKPKQLDLF (190 aa). A divalent metal cation-binding residues include aspartate 19, glutamate 20, and aspartate 112.

This sequence belongs to the RNase HII family. Mn(2+) serves as cofactor. The cofactor is Mg(2+).

The protein resides in the cytoplasm. It catalyses the reaction Endonucleolytic cleavage to 5'-phosphomonoester.. Its function is as follows. Endonuclease that specifically degrades the RNA of RNA-DNA hybrids. In Cytophaga hutchinsonii (strain ATCC 33406 / DSM 1761 / CIP 103989 / NBRC 15051 / NCIMB 9469 / D465), this protein is Ribonuclease HII.